The primary structure comprises 515 residues: 2-isopropylmalate synthase (515 aa).

The Pyruvate carboxyltransferase domain maps to 5 to 267 (VIIFDTTLRD…HTGLDHKEIH (263 aa)). Residues Asp14, His202, His204, and Asn238 each contribute to the Mn(2+) site. Residues 392-515 (KLNYLSVQSG…EMKQQKFATV (124 aa)) form a regulatory domain region.

Belongs to the alpha-IPM synthase/homocitrate synthase family. LeuA type 1 subfamily. Homodimer. Mn(2+) serves as cofactor.

It is found in the cytoplasm. It catalyses the reaction 3-methyl-2-oxobutanoate + acetyl-CoA + H2O = (2S)-2-isopropylmalate + CoA + H(+). Its pathway is amino-acid biosynthesis; L-leucine biosynthesis; L-leucine from 3-methyl-2-oxobutanoate: step 1/4. Its function is as follows. Catalyzes the condensation of the acetyl group of acetyl-CoA with 3-methyl-2-oxobutanoate (2-ketoisovalerate) to form 3-carboxy-3-hydroxy-4-methylpentanoate (2-isopropylmalate). The protein is 2-isopropylmalate synthase of Vibrio atlanticus (strain LGP32) (Vibrio splendidus (strain Mel32)).